Reading from the N-terminus, the 213-residue chain is MVPSVVFWGLIALVGTAKGSYTHSVHSMNPHVHPRLYHGCYGDIMTMETFGAPCDINNLMNCGIHGSEMFAEMDLKAIKPYRILIKEVGQRHCIDPALIAAIISRESHGGAVLQNGWDHKGQRFGLMQLDKNMYHPIGSWDSKEHLLQSVGILTERIKAMKRKFPTWNTAQQLKGGLTAFKSGMETIVTPADIDGDLVDDVLARAKFYKRHGF.

The first 19 residues, 1–19 (MVPSVVFWGLIALVGTAKG), serve as a signal peptide directing secretion. 2 disulfide bridges follow: Cys40-Cys93 and Cys54-Cys62. Residue Glu106 is part of the active site.

The protein belongs to the glycosyl hydrolase 23 family.

It is found in the secreted. Functionally, may act as a potent antibacterial protein that may play a role in the innate immunity. The chain is Lysozyme g-like protein 2 (Lyg2) from Mus musculus (Mouse).